A 370-amino-acid chain; its full sequence is sn-glycerol-3-phosphate import ATP-binding protein UgpC (370 aa).

The region spanning 4-236 (LSLKNIAKRY…PATAFVAAFM (233 aa)) is the ABC transporter domain. 38-45 (GPSGCGKS) serves as a coordination point for ATP.

This sequence belongs to the ABC transporter superfamily. sn-glycerol-3-phosphate importer (TC 3.A.1.1.3) family. The complex is composed of two ATP-binding proteins (UgpC), two transmembrane proteins (UgpA and UgpE) and a solute-binding protein (UgpB).

It localises to the cell inner membrane. It carries out the reaction sn-glycerol 3-phosphate(out) + ATP + H2O = sn-glycerol 3-phosphate(in) + ADP + phosphate + H(+). Functionally, part of the ABC transporter complex UgpBAEC involved in sn-glycerol-3-phosphate (G3P) import. Responsible for energy coupling to the transport system. This chain is sn-glycerol-3-phosphate import ATP-binding protein UgpC, found in Chromobacterium violaceum (strain ATCC 12472 / DSM 30191 / JCM 1249 / CCUG 213 / NBRC 12614 / NCIMB 9131 / NCTC 9757 / MK).